A 242-amino-acid chain; its full sequence is Type III pantothenate kinase (242 aa).

6-13 (DAGNTRIK) contributes to the ATP binding site. Substrate is bound by residues Y90 and 97–100 (GADR). The active-site Proton acceptor is the D99. Position 122 (T122) interacts with ATP. T172 is a substrate binding site.

This sequence belongs to the type III pantothenate kinase family. As to quaternary structure, homodimer. Requires NH4(+) as cofactor. K(+) serves as cofactor.

It localises to the cytoplasm. It carries out the reaction (R)-pantothenate + ATP = (R)-4'-phosphopantothenate + ADP + H(+). Its pathway is cofactor biosynthesis; coenzyme A biosynthesis; CoA from (R)-pantothenate: step 1/5. In terms of biological role, catalyzes the phosphorylation of pantothenate (Pan), the first step in CoA biosynthesis. This is Type III pantothenate kinase from Aromatoleum aromaticum (strain DSM 19018 / LMG 30748 / EbN1) (Azoarcus sp. (strain EbN1)).